A 189-amino-acid polypeptide reads, in one-letter code: uncharacterized protein (189 aa).

The protein to M.jannaschii MJ1461.

This is an uncharacterized protein from Methanocaldococcus jannaschii (strain ATCC 43067 / DSM 2661 / JAL-1 / JCM 10045 / NBRC 100440) (Methanococcus jannaschii).